Reading from the N-terminus, the 129-residue chain is UPF0102 protein amb4503 (129 aa).

Belongs to the UPF0102 family.

The sequence is that of UPF0102 protein amb4503 from Paramagnetospirillum magneticum (strain ATCC 700264 / AMB-1) (Magnetospirillum magneticum).